A 143-amino-acid chain; its full sequence is Peptide methionine sulfoxide reductase MsrB (143 aa).

One can recognise a MsrB domain in the interval 5–127 (NEELKKKLTP…NSAALRFIPK (123 aa)). Cysteine 116 serves as the catalytic Nucleophile.

Belongs to the MsrB Met sulfoxide reductase family.

It catalyses the reaction L-methionyl-[protein] + [thioredoxin]-disulfide + H2O = L-methionyl-(R)-S-oxide-[protein] + [thioredoxin]-dithiol. The chain is Peptide methionine sulfoxide reductase MsrB from Halalkalibacterium halodurans (strain ATCC BAA-125 / DSM 18197 / FERM 7344 / JCM 9153 / C-125) (Bacillus halodurans).